A 355-amino-acid polypeptide reads, in one-letter code: Phosphoribosylformylglycinamidine cyclo-ligase (355 aa).

The protein belongs to the AIR synthase family.

Its subcellular location is the cytoplasm. It catalyses the reaction 2-formamido-N(1)-(5-O-phospho-beta-D-ribosyl)acetamidine + ATP = 5-amino-1-(5-phospho-beta-D-ribosyl)imidazole + ADP + phosphate + H(+). It functions in the pathway purine metabolism; IMP biosynthesis via de novo pathway; 5-amino-1-(5-phospho-D-ribosyl)imidazole from N(2)-formyl-N(1)-(5-phospho-D-ribosyl)glycinamide: step 2/2. The protein is Phosphoribosylformylglycinamidine cyclo-ligase of Methylobacterium sp. (strain 4-46).